The following is a 283-amino-acid chain: CUE domain-containing protein 2 (283 aa).

Positions 87 to 109 (LSGARNKENVQPQSSEVQGQVSI) are enriched in polar residues. Residues 87-139 (LSGARNKENVQPQSSEVQGQVSISPEPLQRPEKLKEETMSSAGDTQDEAAGPE) are disordered. S110 carries the phosphoserine modification. Residues 115 to 124 (QRPEKLKEET) are compositionally biased toward basic and acidic residues. A CUE domain is found at 141 to 184 (ELLPGVDVLLEVFPTCSVEQAQWVLAKARGDLEEAVQMLVEGKQ).

Belongs to the CUEDC2 family. In terms of assembly, interacts with PGR and ESR1.

Its subcellular location is the cytoplasm. It is found in the nucleus. Functionally, controls PGR and ESR1 protein levels through their targeting for ubiquitination and subsequent proteasomal degradation. In Bos taurus (Bovine), this protein is CUE domain-containing protein 2 (CUEDC2).